A 412-amino-acid chain; its full sequence is Acyl-[acyl-carrier-protein] hydrolase FATB2, chloroplastic (412 aa).

2 stretches are compositionally biased toward low complexity: residues 1–13 (TAAS…VPSA) and 56–66 (GSSVGLKSGGL). The N-terminal 46 residues, 1–46 (TAASSAFFPVPSADTSSRPGKLGNGPSSFSPLKPKSIPNGGLQVKA), are a transit peptide targeting the chloroplast. The tract at residues 1–78 (TAASSAFFPV…HDDAPSAPPP (78 aa)) is disordered. Residues Asn311, His313, and Cys348 contribute to the active site.

It belongs to the acyl-ACP thioesterase family.

The protein resides in the plastid. The protein localises to the chloroplast. It catalyses the reaction tetradecanoyl-[ACP] + H2O = tetradecanoate + holo-[ACP] + H(+). The catalysed reaction is hexadecanoyl-[ACP] + H2O = hexadecanoate + holo-[ACP] + H(+). Plays an essential role in chain termination during de novo fatty acid synthesis. Possesses thioesterase activity for medium chain acyl-ACPs. Substrate preference is 14:0 &gt; 16:0 &gt; 16:1. This is Acyl-[acyl-carrier-protein] hydrolase FATB2, chloroplastic from Cuphea viscosissima (Blue waxweed).